Consider the following 769-residue polypeptide: Endothelin-converting enzyme 1 (769 aa).

At 1–67 (MRTVWSPLAA…WAARTSVEKR (67 aa)) the chain is on the cytoplasmic side. The residue at position 24 (T24) is a Phosphothreonine. A helical; Signal-anchor for type II membrane protein membrane pass occupies residues 68-88 (LVVLVTLLAAGLVACLAALGI). At 89–769 (QYQTRTPPVC…MNPHHKCEVW (681 aa)) the chain is on the extracellular side. Residues 97 to 769 (VCLTEACVSV…MNPHHKCEVW (673 aa)) form the Peptidase M13 domain. Intrachain disulfides connect C98–C103, C121–C754, C129–C714, C184–C434, and C643–C766. 8 N-linked (GlcNAc...) asparagine glycosylation sites follow: N165, N186, N209, N269, N315, N361, N382, and N538. H606 provides a ligand contact to Zn(2+). E607 is an active-site residue. H610 lines the Zn(2+) pocket. N631 and N650 each carry an N-linked (GlcNAc...) asparagine glycan. E666 contacts Zn(2+). D670 (proton donor) is an active-site residue.

It belongs to the peptidase M13 family. In terms of assembly, homodimer; disulfide-linked. Interacts with PPP1R16B. Interacts with TSPAN8; this interaction recruits the endothelin converting enzyme ECE1 to tetraspanin-enriched microdomains and positively modulates its enzymatic activity. Zn(2+) is required as a cofactor.

The protein localises to the cell membrane. It catalyses the reaction Hydrolysis of the 21-Trp-|-Val-22 bond in big endothelin to form endothelin 1.. With respect to regulation, inhibited by phosphoramidon. Functionally, converts big endothelin-1 to endothelin-1. This is Endothelin-converting enzyme 1 (Ece1) from Mus musculus (Mouse).